Here is a 134-residue protein sequence, read N- to C-terminus: MPPKTRSGARRTGRRVVKKNVANGHAYIKSTFNNTIVSITDPKGAVISWASSGHVGFKGSRKSTPFAAQMAAESAARKAMDHGMKKVDVFVKGPGSGRETAIRSLSTAGLEVGTIADVTPQPHNGCRPPKRRRV.

The protein belongs to the universal ribosomal protein uS11 family. In terms of assembly, part of the 30S ribosomal subunit. Interacts with proteins S7 and S18. Binds to IF-3.

Located on the platform of the 30S subunit, it bridges several disparate RNA helices of the 16S rRNA. Forms part of the Shine-Dalgarno cleft in the 70S ribosome. This Corynebacterium jeikeium (strain K411) protein is Small ribosomal subunit protein uS11.